Consider the following 254-residue polypeptide: Proteasome subunit alpha type-7 (254 aa).

An O-linked (GlcNAc) serine glycan is attached at Ser-136. A Phosphotyrosine modification is found at Tyr-159. N6-acetyllysine is present on Lys-233.

This sequence belongs to the peptidase T1A family. In terms of assembly, the 26S proteasome consists of a 20S proteasome core and two 19S regulatory subunits. The 20S proteasome core is a barrel-shaped complex made of 28 subunits that are arranged in four stacked rings. The two outer rings are each formed by seven alpha subunits, and the two inner rings are formed by seven beta subunits. The proteolytic activity is exerted by three beta-subunits PSMB5, PSMB6 and PSMB7. PSMA7 interacts directly with the PSMG1-PSMG2 heterodimer which promotes 20S proteasome assembly. Interacts with HIF1A. Interacts with RAB7A. Interacts with PRKN. Interacts with ABL1 and ABL2. Interacts with EMAP2. Interacts with MAVS. Ubiquitous.

It localises to the cytoplasm. The protein resides in the nucleus. Component of the 20S core proteasome complex involved in the proteolytic degradation of most intracellular proteins. This complex plays numerous essential roles within the cell by associating with different regulatory particles. Associated with two 19S regulatory particles, forms the 26S proteasome and thus participates in the ATP-dependent degradation of ubiquitinated proteins. The 26S proteasome plays a key role in the maintenance of protein homeostasis by removing misfolded or damaged proteins that could impair cellular functions, and by removing proteins whose functions are no longer required. Associated with the PA200 or PA28, the 20S proteasome mediates ubiquitin-independent protein degradation. This type of proteolysis is required in several pathways including spermatogenesis (20S-PA200 complex) or generation of a subset of MHC class I-presented antigenic peptides (20S-PA28 complex). Inhibits the transactivation function of HIF-1A under both normoxic and hypoxia-mimicking conditions. The interaction with EMAP2 increases the proteasome-mediated HIF-1A degradation under the hypoxic conditions. Plays a role in hepatitis C virus internal ribosome entry site-mediated translation. Mediates nuclear translocation of the androgen receptor (AR) and thereby enhances androgen-mediated transactivation. Promotes MAVS degradation and thereby negatively regulates MAVS-mediated innate immune response. This is Proteasome subunit alpha type-7 (Psma7) from Rattus norvegicus (Rat).